The chain runs to 385 residues: Branched-chain-amino-acid aminotransferase, cytosolic (385 aa).

Residue Lys-221 is modified to N6-(pyridoxal phosphate)lysine.

The protein belongs to the class-IV pyridoxal-phosphate-dependent aminotransferase family. In terms of assembly, homodimer. Pyridoxal 5'-phosphate serves as cofactor. In terms of tissue distribution, expressed in muscles.

The protein resides in the cytoplasm. It catalyses the reaction L-leucine + 2-oxoglutarate = 4-methyl-2-oxopentanoate + L-glutamate. The enzyme catalyses L-isoleucine + 2-oxoglutarate = (S)-3-methyl-2-oxopentanoate + L-glutamate. It carries out the reaction L-valine + 2-oxoglutarate = 3-methyl-2-oxobutanoate + L-glutamate. Its function is as follows. Catalyzes the first reaction in the catabolism of the essential branched chain amino acids leucine, isoleucine, and valine. This is Branched-chain-amino-acid aminotransferase, cytosolic (BCAT1) from Ovis aries (Sheep).